Here is a 415-residue protein sequence, read N- to C-terminus: uncharacterized protein (415 aa).

Histidine 88 serves as a coordination point for Zn(2+). Aspartate 90 is an active-site residue. Aspartate 121 provides a ligand contact to Zn(2+). The active-site Proton acceptor is the glutamate 155. Zn(2+)-binding residues include glutamate 156, aspartate 185, and histidine 392.

Belongs to the peptidase M20A family. Requires Zn(2+) as cofactor. It depends on Co(2+) as a cofactor.

This is an uncharacterized protein from Methanococcus maripaludis (strain DSM 14266 / JCM 13030 / NBRC 101832 / S2 / LL).